Consider the following 174-residue polypeptide: Achaete-scute homolog 3 (174 aa).

The basic motif stretch occupies residues 92–105; it reads AFIRKRNERERQRV. The bHLH domain occupies 92 to 144; the sequence is AFIRKRNERERQRVKCVNEGYARLRRHLPEDYLEKRLSKVETLRAAIKYISYL. The helix-loop-helix motif stretch occupies residues 106–144; sequence KCVNEGYARLRRHLPEDYLEKRLSKVETLRAAIKYISYL. The disordered stretch occupies residues 153–174; the sequence is SETKKNPRTASCGSLDPALRVI.

In terms of assembly, efficient DNA binding requires dimerization with another bHLH protein. As to expression, expressed in the salivary duct cells. Also expressed at lower levels in testis and epididymis. Expressed in the olfactory epithelium (OE), in a subset of apical microvillar cells.

It localises to the nucleus. Transcriptional repressor. Inhibits myogenesis. Plays a role in progenitor cells which differentiate into ductal and acinar, but not myoepithelial, cell lineages in the salivary glands. Involved in the functions of the microvillar cells and Bowman's glands and probably, in a non-cell-autonomous manner, in the development or regeneration of a complete olfactory epithelium (OE). The protein is Achaete-scute homolog 3 (Ascl3) of Mus musculus (Mouse).